The following is a 2544-amino-acid chain: DNA polymerase theta (2544 aa).

Positions 1-13 (MSLPRRSRKRRRS) are enriched in basic residues. A disordered region spans residues 1 to 57 (MSLPRRSRKRRRSSSGSDTFSGDGDSFVSPQLRCGPVLSPPPGLGRGRRLTGTGTNK). Positions 14 to 29 (SSGSDTFSGDGDSFVS) are enriched in low complexity. Residues Gln95 and 114–121 (APTSAGKT) each bind ATP. Residues 101–285 (LGHVLEGKNL…WLNAELYHTD (185 aa)) enclose the Helicase ATP-binding domain. The segment at 101 to 551 (LGHVLEGKNL…STSQDMQTYA (451 aa)) is helicase activity. The short motif at 215 to 218 (DELH) is the DEAH box element. The 232-residue stretch at 320–551 (GDEDHIVSLC…STSQDMQTYA (232 aa)) folds into the Helicase C-terminal domain. Residues 844 to 890 (DEEEEAAEERRSMRTIWVTGKGLSAREAAALIVEEAKMILQQDLIEM) form an interaction with RAD51 region. The segment at 896-955 (PKSPLSSSTHSRTSTSEVKEHTFKSQTKSSHKRLASMGRNSIRASGSNDKPSPDAERGID) is disordered. Low complexity predominate over residues 898–911 (SPLSSSTHSRTSTS). Over residues 933-945 (GRNSIRASGSNDK) the composition is skewed to polar residues. Positions 946 to 955 (PSPDAERGID) are enriched in basic and acidic residues. Position 983 is an N6-acetyllysine (Lys983). A compositionally biased stretch (polar residues) spans 1022–1034 (LSFSSEQVNNTLP). Disordered regions lie at residues 1022–1058 (LSFSSEQVNNTLPSGRDRKYQKKSWGSSPVRDSGMHR) and 1128–1167 (VGHPAAGSSPAAARDRRGLAARETEKGNEALTENGGESQL). Residues 1128-1139 (VGHPAAGSSPAA) show a composition bias toward low complexity. Positions 1140-1155 (ARDRRGLAARETEKGN) are enriched in basic and acidic residues. Position 1265 is a phosphoserine (Ser1265). Disordered regions lie at residues 1266 to 1288 (GVQGKTGAHATNRTEHSHASNPA) and 1331 to 1353 (QNKCHSTPGDQHVPGAANTDHVD). Residues Ser1438, Ser1442, Ser1444, and Ser1449 each carry the phosphoserine modification. The disordered stretch occupies residues 1478–1501 (FSNPPHPQEDPVMTPTVSEPQGTQ). Polar residues predominate over residues 1492 to 1501 (PTVSEPQGTQ). Phosphoserine is present on residues Ser1511, Ser1519, Ser1585, and Ser1592. Positions 1557-1591 (ECPQGKLVRGDQNEGSPKPKLTETNQDNSFTWSGA) are disordered. A compositionally biased stretch (polar residues) spans 1578-1591 (TETNQDNSFTWSGA). Composition is skewed to basic and acidic residues over residues 1606 to 1616 (VSSPRENEKPK) and 1628 to 1638 (NSKESHEREEI). The tract at residues 1606-1697 (VSSPRENEKP…GLIPPTPVPA (92 aa)) is disordered. Residues 1641–1652 (DLGTVQRTSVFP) are compositionally biased toward polar residues. The segment covering 1656 to 1667 (VKNRTEGLESKA) has biased composition (basic and acidic residues). Thr1710 bears the Phosphothreonine mark. Residues 2052–2538 (AECESQKHVM…KVKIGASWGE (487 aa)) are DNA polymerase activity. 2 loop regions span residues 2097–2132 (KLPPNGEMKTQGSKKTLGSTRRGNESGRRMRLGRQF) and 2212–2276 (EIKM…VPFP). The segment covering 2104–2117 (MKTQGSKKTLGSTR) has biased composition (polar residues). The disordered stretch occupies residues 2104–2124 (MKTQGSKKTLGSTRRGNESGR). The For DNA polymerase activity role is filled by Asp2284. The Mg(2+) site is built by Asp2284 and Tyr2285. Positions 2445 to 2489 (QLETFRSTFKSHGHRESMLQNDRTGLLPKRKLKGMFCPMRGGFFI) are loop 3. Asp2494 provides a ligand contact to Mg(2+).

It belongs to the DNA polymerase type-A family. As to quaternary structure, homomultimer; forms homodimers and homotetramers. Interacts with RAD51. Interacts with ORC2 and ORC4. Interacts with RHNO1; interaction takes place during mitosis and promotes POLQ recruitment to DNA damage sites. Interacts (when phosphorylated) with TOPBP1 (via BRCT domains 7 and 8); promoting POLQ recruitment to DNA damage sites. Mg(2+) serves as cofactor. In terms of processing, phosphorylated by PLK1; promoting interaction with TOPBP1 and recruitment to DNA damage sites.

The protein localises to the nucleus. Its subcellular location is the chromosome. The catalysed reaction is DNA(n) + a 2'-deoxyribonucleoside 5'-triphosphate = DNA(n+1) + diphosphate. It carries out the reaction ATP + H2O = ADP + phosphate + H(+). Its function is as follows. Low-fidelity DNA polymerase with a helicase activity that promotes microhomology-mediated end-joining (MMEJ), an alternative non-homologous end-joining (NHEJ) machinery required to repair double-strand breaks in DNA during mitosis. MMEJ is an error-prone repair pathway that produces deletions of sequences from the strand being repaired and promotes genomic rearrangements, such as telomere fusions, some of them leading to cellular transformation. MMEJ is required during mitosis to repair persistent double-strand breaks that originate in S-phase. Although error-prone, MMEJ protects against chromosomal instability and tumorigenesis. The polymerase acts by binding directly the 2 ends of resected double-strand breaks, allowing microhomologous sequences in the overhangs to form base pairs. It then extends each strand from the base-paired region using the opposing overhang as a template. Requires partially resected DNA containing 2 to 6 base pairs of microhomology to perform MMEJ. The polymerase lacks proofreading activity and is highly promiscuous: unlike most polymerases, promotes extension of ssDNA and partial ssDNA (pssDNA) substrates. When the ends of a break do not contain terminal microhomology must identify embedded complementary sequences through a scanning step. Also acts as a DNA helicase, promoting dissociation of the replication protein A complex (RPA/RP-A), composed of RPA1, RPA2 and RPA3, from resected double-strand breaks to allow their annealing and subsequent joining by MMEJ. Removal of RPA/RP-A complex proteins prevents RAD51 accumulation at resected ends, thereby inhibiting homology-recombination repair (HR) pathway. Also shows RNA-directed DNA polymerase activity to mediate DNA repair in vitro; however this activity needs additional evidence in vivo. May also have lyase activity. Involved in somatic hypermutation of immunoglobulin genes, a process that requires the activity of DNA polymerases to ultimately introduce mutations at both A/T and C/G base pairs. However, POLQ does not play a major role in somatic hypermutation. POLQ-mediated end joining activity is involved in random integration of exogenous DNA hampers. The polypeptide is DNA polymerase theta (Mus musculus (Mouse)).